The primary structure comprises 1088 residues: Serine/threonine-protein kinase 11-interacting protein (1088 aa).

LRR repeat units lie at residues serine 109–tyrosine 130, glutamine 132–cysteine 152, alanine 164–leucine 185, alanine 187–cysteine 209, glutamate 210–glycine 231, alanine 233–arginine 254, asparagine 255–tryptophan 276, and glutamate 280–threonine 301. 2 disordered regions span residues glycine 335 to glycine 407 and leucine 437 to valine 533. Low complexity predominate over residues proline 346–glycine 367. Residues histidine 375–arginine 385 are compositionally biased toward basic residues. Phosphoserine is present on residues serine 387, serine 389, and serine 392. Residues threonine 447 to serine 460 show a composition bias toward low complexity. Serine 470 is subject to Phosphoserine. Acidic residues predominate over residues glutamate 508 to aspartate 529. A Phosphoserine modification is found at serine 599. Disordered stretches follow at residues threonine 724–proline 780 and aspartate 978–arginine 1009. A compositionally biased stretch (polar residues) spans glutamate 733 to alanine 742. Over residues glycine 750–lysine 759 the composition is skewed to basic and acidic residues. Phosphoserine is present on residues serine 761, serine 773, and serine 777. Low complexity predominate over residues aspartate 978 to glutamate 994.

This sequence belongs to the STK11IP family. Found in a ternary complex composed of STK11/LKB1, STK11IP and SMAD4. Interacts with STK11/LKB1 and SMAD4.

Its subcellular location is the cytoplasm. Its function is as follows. May regulate STK11/LKB1 function by controlling its subcellular localization. This chain is Serine/threonine-protein kinase 11-interacting protein (STK11IP), found in Homo sapiens (Human).